We begin with the raw amino-acid sequence, 524 residues long: Serine/threonine-protein phosphatase 2A 56 kDa regulatory subunit gamma isoform (524 aa).

At M1 the chain carries N-acetylmethionine. The interval 476 to 508 (SDEARQAQKELKKDRPLVRRKSELPQDPHTEKA) is disordered.

This sequence belongs to the phosphatase 2A regulatory subunit B56 family. PP2A consists of a common heterodimeric core enzyme, composed of PPP2CA a 36 kDa catalytic subunit (subunit C) and PPP2R1A a 65 kDa constant regulatory subunit (PR65 or subunit A), that associates with a variety of regulatory subunits. Proteins that associate with the core dimer include three families of regulatory subunits B (the R2/B/PR55/B55, R3/B''/PR72/PR130/PR59 and R5/B'/B56 families), the 48 kDa variable regulatory subunit, viral proteins, and cell signaling molecules. Interacts with SGO1. Interacts with SGO1; the interaction is direct. May interact with TP53. Interacts with IER3 and/or ERK kinases; regulates ERK dephosphorylation. Interacts with CIP2A; this interaction stabilizes CIP2A. As to expression, highest levels in heart, liver and brain. Lower levels in skeletal muscle, spleen, kidney and lung. Isoform 4 is testis-specific.

The protein resides in the nucleus. It localises to the chromosome. It is found in the centromere. Functionally, the B regulatory subunit might modulate substrate selectivity and catalytic activity, and might also direct the localization of the catalytic enzyme to a particular subcellular compartment. The PP2A-PPP2R5C holoenzyme may activate TP53 and play a role in DNA damage-induced inhibition of cell proliferation. PP2A-PPP2R5C may also regulate the ERK signaling pathway through ERK dephosphorylation. This chain is Serine/threonine-protein phosphatase 2A 56 kDa regulatory subunit gamma isoform (Ppp2r5c), found in Mus musculus (Mouse).